Here is a 27-residue protein sequence, read N- to C-terminus: Secretin (27 aa).

V27 is modified (valine amide).

This sequence belongs to the glucagon family.

Its subcellular location is the secreted. Hormone involved in different processes, such as regulation of the pH of the duodenal content, food intake and water homeostasis. Exerts its biological effects by binding to secretin receptor (SCTR), a G-protein coupled receptor expressed in the basolateral domain of several cells. Acts as a key gastrointestinal hormone by regulating the pH of the duodenal content. Secreted by S cells of the duodenum in the crypts of Lieberkuehn and regulates the pH of the duodenum by (1) inhibiting the secretion of gastric acid from the parietal cells of the stomach and (2) stimulating the production of bicarbonate (NaHCO(3)) from the ductal cells of the pancreas. Production of bicarbonate is essential to neutralize the pH and ensure no damage is done to the small intestine by the gastric acid. In addition to regulating the pH of the duodenal content, plays a central role in diet induced thermogenesis: acts as a non-sympathetic brown fat (BAT) activator mediating prandial thermogenesis, which consequentially induces satiation. Mechanistically, secretin released by the gut after a meal binds to secretin receptor (SCTR) in brown adipocytes, activating brown fat thermogenesis by stimulating lipolysis, which is sensed in the brain and promotes satiation. Also able to stimulate lipolysis in white adipocytes. Also plays an important role in cellular osmoregulation: released into the systemic circulation in response to hyperosmolality and acts at different levels in the hypothalamus, pituitary and kidney to regulate water homeostasis. Also plays a role in the central nervous system, possibly by acting as a neuropeptide hormone: required for hippocampal synaptic function and neural progenitor cells maintenance. In Bos taurus (Bovine), this protein is Secretin.